Consider the following 124-residue polypeptide: Fluoride-specific ion channel FluC (124 aa).

The next 4 membrane-spanning stretches (helical) occupy residues 5–25, 32–52, 61–81, and 94–114; these read LLVS…AVWF, FAFG…ITLG, LLFV…SAEV, and LAVI…GILV. Residues G69 and T72 each coordinate Na(+).

This sequence belongs to the fluoride channel Fluc/FEX (TC 1.A.43) family.

It localises to the cell inner membrane. It catalyses the reaction fluoride(in) = fluoride(out). Na(+) is not transported, but it plays an essential structural role and its presence is essential for fluoride channel function. Functionally, fluoride-specific ion channel. Important for reducing fluoride concentration in the cell, thus reducing its toxicity. The sequence is that of Fluoride-specific ion channel FluC from Haemophilus ducreyi (strain 35000HP / ATCC 700724).